A 139-amino-acid chain; its full sequence is Putative nickel-responsive regulator (139 aa).

4 residues coordinate Ni(2+): His-79, His-90, His-92, and Cys-98.

It belongs to the transcriptional regulatory CopG/NikR family. Ni(2+) is required as a cofactor.

Its function is as follows. Transcriptional regulator. The chain is Putative nickel-responsive regulator from Nitratidesulfovibrio vulgaris (strain DSM 19637 / Miyazaki F) (Desulfovibrio vulgaris).